A 432-amino-acid chain; its full sequence is Interleukin-11 receptor subunit alpha-1 (432 aa).

A signal peptide spans M1–S23. The Extracellular segment spans residues S24–A372. Positions P27 to G110 constitute an Ig-like C2-type domain. Intrachain disulfides connect C48-C94, C120-C130, and C170-C180. 2 consecutive Fibronectin type-III domains span residues P112–D219 and P220–T317. An N-linked (GlcNAc...) asparagine glycan is attached at N127. The disordered stretch occupies residues K151–C170. N194 is a glycosylation site (N-linked (GlcNAc...) asparagine). The short motif at W304–S308 is the WSXWS motif element. 2 disordered regions span residues P309 to G332 and E342 to H361. The chain crosses the membrane as a helical span at residues S373 to L393. Residues R394–S432 are Cytoplasmic-facing.

Belongs to the type I cytokine receptor family. Type 3 subfamily. On IL11 binding, forms a multimer complex with IL6ST/gp130. Post-translationally, a short soluble form is also released from the membrane by proteolysis. The sIL11RA is formed either by limited proteolysis of membrane-bound receptors, a process referred to as ectodomain shedding, or directly secreted from the cells after alternative mRNA splicing. mIL11RA is cleaved by the proteases ADAM10, ELANE and PRTN3. Widely expressed in all adult tissues and in embryos. Highest levels in kidney, skeletal muscle and embryo.

The protein resides in the membrane. It localises to the secreted. Functionally, receptor for interleukin-11. The receptor systems for IL6, LIF, OSM, CNTF, IL11 and CT1 can utilize IL6ST for initiating signal transmission. The IL11/IL11RA/IL6ST complex may be involved in the control of proliferation and/or differentiation of skeletogenic progenitor or other mesenchymal cells. Essential for the normal development of craniofacial bones and teeth. In terms of biological role, soluble form of IL11 receptor (sIL11RA) that acts as an agonist of IL11 activity. The IL11:sIL11RA complex binds to IL6ST/gp130 on cell surfaces and induces signaling also on cells that do not express membrane-bound IL11RA in a process called IL11 trans-signaling. In Mus musculus (Mouse), this protein is Interleukin-11 receptor subunit alpha-1.